We begin with the raw amino-acid sequence, 163 residues long: Phosphopantetheine adenylyltransferase (163 aa).

Threonine 10 contributes to the substrate binding site. Residues 10–11 (TF) and histidine 18 contribute to the ATP site. Substrate contacts are provided by lysine 42, leucine 74, and arginine 88. ATP-binding positions include 89-91 (GLR), glutamate 99, and 124-130 (NSFISST).

This sequence belongs to the bacterial CoaD family. As to quaternary structure, homohexamer. The cofactor is Mg(2+).

It is found in the cytoplasm. It catalyses the reaction (R)-4'-phosphopantetheine + ATP + H(+) = 3'-dephospho-CoA + diphosphate. The protein operates within cofactor biosynthesis; coenzyme A biosynthesis; CoA from (R)-pantothenate: step 4/5. Reversibly transfers an adenylyl group from ATP to 4'-phosphopantetheine, yielding dephospho-CoA (dPCoA) and pyrophosphate. In Shewanella baltica (strain OS195), this protein is Phosphopantetheine adenylyltransferase.